The primary structure comprises 406 residues: Arginine biosynthesis bifunctional protein ArgJ (406 aa).

Substrate contacts are provided by T152, K179, T190, E277, N401, and S406. T190 acts as the Nucleophile in catalysis.

The protein belongs to the ArgJ family. As to quaternary structure, heterotetramer of two alpha and two beta chains.

It localises to the cytoplasm. The catalysed reaction is N(2)-acetyl-L-ornithine + L-glutamate = N-acetyl-L-glutamate + L-ornithine. The enzyme catalyses L-glutamate + acetyl-CoA = N-acetyl-L-glutamate + CoA + H(+). It participates in amino-acid biosynthesis; L-arginine biosynthesis; L-ornithine and N-acetyl-L-glutamate from L-glutamate and N(2)-acetyl-L-ornithine (cyclic): step 1/1. Its pathway is amino-acid biosynthesis; L-arginine biosynthesis; N(2)-acetyl-L-ornithine from L-glutamate: step 1/4. Catalyzes two activities which are involved in the cyclic version of arginine biosynthesis: the synthesis of N-acetylglutamate from glutamate and acetyl-CoA as the acetyl donor, and of ornithine by transacetylation between N(2)-acetylornithine and glutamate. The chain is Arginine biosynthesis bifunctional protein ArgJ from Neisseria gonorrhoeae.